Consider the following 163-residue polypeptide: UPF0763 protein CJJ81176_1011 (163 aa).

The protein belongs to the UPF0763 family.

This chain is UPF0763 protein CJJ81176_1011, found in Campylobacter jejuni subsp. jejuni serotype O:23/36 (strain 81-176).